A 33-amino-acid chain; its full sequence is Protein YdgV (33 aa).

This is Protein YdgV from Escherichia coli (strain K12).